The primary structure comprises 304 residues: Agmatinase (304 aa).

Mn(2+) contacts are provided by histidine 126, aspartate 149, histidine 151, aspartate 153, aspartate 230, and aspartate 232.

This sequence belongs to the arginase family. Agmatinase subfamily. Mn(2+) serves as cofactor.

The enzyme catalyses agmatine + H2O = urea + putrescine. It participates in amine and polyamine biosynthesis; putrescine biosynthesis via agmatine pathway; putrescine from agmatine: step 1/1. Catalyzes the formation of putrescine from agmatine. The protein is Agmatinase of Edwardsiella ictaluri (strain 93-146).